The sequence spans 391 residues: Na(+)/H(+) antiporter NhaA 2 (391 aa).

11 consecutive transmembrane segments (helical) span residues 25-45 (AGGI…NSPL), 56-76 (VWLG…IFFL), 98-118 (ALPG…YIAI), 128-148 (GWAI…SLLG), 157-177 (VFLA…IAFF), 180-200 (SGLN…LVAL), 208-228 (LLPY…SGVH), 264-284 (VAFA…LSGI), 297-317 (VALG…VLAI), 335-355 (GVAI…NLAF), and 364-384 (EVKV…IVLL).

This sequence belongs to the NhaA Na(+)/H(+) (TC 2.A.33) antiporter family.

It localises to the cell inner membrane. It carries out the reaction Na(+)(in) + 2 H(+)(out) = Na(+)(out) + 2 H(+)(in). In terms of biological role, na(+)/H(+) antiporter that extrudes sodium in exchange for external protons. The polypeptide is Na(+)/H(+) antiporter NhaA 2 (Pseudomonas syringae pv. tomato (strain ATCC BAA-871 / DC3000)).